A 367-amino-acid chain; its full sequence is Protein-glutamate methylesterase/protein-glutamine glutaminase 2 (367 aa).

In terms of domain architecture, Response regulatory spans 3–120 (SVVVVDDSAF…SLDIVRIEND (118 aa)). 4-aspartylphosphate is present on D54. Residues 132–174 (RMLRTPRPVRPAPTASAPAQTAQVASAAPATAPSRPAMPATRA) are disordered. The span at 143–174 (APTASAPAQTAQVASAAPATAPSRPAMPATRA) shows a compositional bias: low complexity. In terms of domain architecture, CheB-type methylesterase spans 175–367 (SRPVRDVVAI…AAAIMNGLYK (193 aa)). Catalysis depends on residues S187, H214, and D310.

Belongs to the CheB family. Post-translationally, phosphorylated by CheA. Phosphorylation of the N-terminal regulatory domain activates the methylesterase activity.

It localises to the cytoplasm. The catalysed reaction is [protein]-L-glutamate 5-O-methyl ester + H2O = L-glutamyl-[protein] + methanol + H(+). It catalyses the reaction L-glutaminyl-[protein] + H2O = L-glutamyl-[protein] + NH4(+). In terms of biological role, involved in chemotaxis. Part of a chemotaxis signal transduction system that modulates chemotaxis in response to various stimuli. Catalyzes the demethylation of specific methylglutamate residues introduced into the chemoreceptors (methyl-accepting chemotaxis proteins or MCP) by CheR. Also mediates the irreversible deamidation of specific glutamine residues to glutamic acid. The chain is Protein-glutamate methylesterase/protein-glutamine glutaminase 2 from Nitratidesulfovibrio vulgaris (strain ATCC 29579 / DSM 644 / CCUG 34227 / NCIMB 8303 / VKM B-1760 / Hildenborough) (Desulfovibrio vulgaris).